We begin with the raw amino-acid sequence, 203 residues long: Nucleoside triphosphate pyrophosphatase (203 aa).

Catalysis depends on D78, which acts as the Proton acceptor.

Belongs to the Maf family. The cofactor is a divalent metal cation.

It is found in the cytoplasm. The catalysed reaction is a ribonucleoside 5'-triphosphate + H2O = a ribonucleoside 5'-phosphate + diphosphate + H(+). It catalyses the reaction a 2'-deoxyribonucleoside 5'-triphosphate + H2O = a 2'-deoxyribonucleoside 5'-phosphate + diphosphate + H(+). Nucleoside triphosphate pyrophosphatase. May have a dual role in cell division arrest and in preventing the incorporation of modified nucleotides into cellular nucleic acids. The polypeptide is Nucleoside triphosphate pyrophosphatase (Prochlorococcus marinus (strain MIT 9301)).